A 187-amino-acid polypeptide reads, in one-letter code: Protein ECM23 (187 aa).

Disordered regions lie at residues 106–127 (GKKS…LPNG) and 167–187 (KKIR…FKNK). The GATA-type zinc-finger motif lies at 126 to 180 (NGQPKECATCGDTWTSQWRSGPNGNVELCSRCGIAYRKKMEKKIRSQQSSDDGTK).

Involved in morphogenesis. May be involved in cell wall organization and biogenesis. The protein is Protein ECM23 (ECM23) of Saccharomyces cerevisiae (strain ATCC 204508 / S288c) (Baker's yeast).